Reading from the N-terminus, the 157-residue chain is Putative low molecular weight protein-tyrosine-phosphatase slr0328 (157 aa).

Cys-7 serves as the catalytic Nucleophile. Arg-13 is a catalytic residue. Asp-124 acts as the Proton donor in catalysis.

The protein belongs to the low molecular weight phosphotyrosine protein phosphatase family.

It catalyses the reaction O-phospho-L-tyrosyl-[protein] + H2O = L-tyrosyl-[protein] + phosphate. The polypeptide is Putative low molecular weight protein-tyrosine-phosphatase slr0328 (Synechocystis sp. (strain ATCC 27184 / PCC 6803 / Kazusa)).